Consider the following 456-residue polypeptide: Bifunctional protein GlmU (456 aa).

The segment at Met-1 to Arg-229 is pyrophosphorylase. Residues Leu-11–Gly-14, Lys-25, Gln-76, Gly-81–Thr-82, Tyr-103–Asp-105, Gly-140, Glu-154, Asn-169, and Asn-227 contribute to the UDP-N-acetyl-alpha-D-glucosamine site. Asp-105 is a binding site for Mg(2+). Mg(2+) is bound at residue Asn-227. The interval Leu-230 to Ala-250 is linker. The segment at Gly-251 to Lys-456 is N-acetyltransferase. UDP-N-acetyl-alpha-D-glucosamine-binding residues include Arg-333 and Lys-351. His-363 acts as the Proton acceptor in catalysis. UDP-N-acetyl-alpha-D-glucosamine is bound by residues Tyr-366 and Asn-377. Residues Ala-380, Asn-386–Tyr-387, Ser-405, Ala-423, and Arg-440 each bind acetyl-CoA.

This sequence in the N-terminal section; belongs to the N-acetylglucosamine-1-phosphate uridyltransferase family. In the C-terminal section; belongs to the transferase hexapeptide repeat family. As to quaternary structure, homotrimer. The cofactor is Mg(2+).

It is found in the cytoplasm. It carries out the reaction alpha-D-glucosamine 1-phosphate + acetyl-CoA = N-acetyl-alpha-D-glucosamine 1-phosphate + CoA + H(+). It catalyses the reaction N-acetyl-alpha-D-glucosamine 1-phosphate + UTP + H(+) = UDP-N-acetyl-alpha-D-glucosamine + diphosphate. The protein operates within nucleotide-sugar biosynthesis; UDP-N-acetyl-alpha-D-glucosamine biosynthesis; N-acetyl-alpha-D-glucosamine 1-phosphate from alpha-D-glucosamine 6-phosphate (route II): step 2/2. It functions in the pathway nucleotide-sugar biosynthesis; UDP-N-acetyl-alpha-D-glucosamine biosynthesis; UDP-N-acetyl-alpha-D-glucosamine from N-acetyl-alpha-D-glucosamine 1-phosphate: step 1/1. Its pathway is bacterial outer membrane biogenesis; LPS lipid A biosynthesis. In terms of biological role, catalyzes the last two sequential reactions in the de novo biosynthetic pathway for UDP-N-acetylglucosamine (UDP-GlcNAc). The C-terminal domain catalyzes the transfer of acetyl group from acetyl coenzyme A to glucosamine-1-phosphate (GlcN-1-P) to produce N-acetylglucosamine-1-phosphate (GlcNAc-1-P), which is converted into UDP-GlcNAc by the transfer of uridine 5-monophosphate (from uridine 5-triphosphate), a reaction catalyzed by the N-terminal domain. The polypeptide is Bifunctional protein GlmU (Serratia proteamaculans (strain 568)).